The following is a 150-amino-acid chain: MWKEFREFAMRGNVIDLAIGIIIGAAFGKIVTSFVNDILMPPIGLLLGKVDFTNLYINLSGKNYSSLADATAAGAPVIKYGVFLNSIIDFIIVAVAIFLVVKQINRLKKQEVAAAPTTKECRYCKSEISIAATRCPFCTSELLDTGRPLK.

Transmembrane regions (helical) follow at residues 14–34 and 81–101; these read VIDL…VTSF and GVFL…FLVV.

This sequence belongs to the MscL family. As to quaternary structure, homopentamer.

The protein resides in the cell membrane. In terms of biological role, channel that opens in response to stretch forces in the membrane lipid bilayer. May participate in the regulation of osmotic pressure changes within the cell. The chain is Large-conductance mechanosensitive channel from Syntrophomonas wolfei subsp. wolfei (strain DSM 2245B / Goettingen).